A 156-amino-acid polypeptide reads, in one-letter code: ATP synthase subunit b (156 aa).

The helical transmembrane segment at 7–29 (LIGQSITFIFFVWFSMKFVWPPI) threads the bilayer.

Belongs to the ATPase B chain family. F-type ATPases have 2 components, F(1) - the catalytic core - and F(0) - the membrane proton channel. F(1) has five subunits: alpha(3), beta(3), gamma(1), delta(1), epsilon(1). F(0) has three main subunits: a(1), b(2) and c(10-14). The alpha and beta chains form an alternating ring which encloses part of the gamma chain. F(1) is attached to F(0) by a central stalk formed by the gamma and epsilon chains, while a peripheral stalk is formed by the delta and b chains.

It is found in the cell inner membrane. In terms of biological role, f(1)F(0) ATP synthase produces ATP from ADP in the presence of a proton or sodium gradient. F-type ATPases consist of two structural domains, F(1) containing the extramembraneous catalytic core and F(0) containing the membrane proton channel, linked together by a central stalk and a peripheral stalk. During catalysis, ATP synthesis in the catalytic domain of F(1) is coupled via a rotary mechanism of the central stalk subunits to proton translocation. Functionally, component of the F(0) channel, it forms part of the peripheral stalk, linking F(1) to F(0). The polypeptide is ATP synthase subunit b (Thiobacillus denitrificans (strain ATCC 25259 / T1)).